The primary structure comprises 319 residues: Glutathione synthetase (319 aa).

The region spanning 125–311 (EKLFATLFPQ…IGGLLMDAIE (187 aa)) is the ATP-grasp domain. 151-208 (FAEQQGDVILKPLDGMGGASIFRHRAGDPNLSVILETLTAHGTQQIMAQGYLPAIKDG) serves as a coordination point for ATP. Residues Glu-282 and Asn-284 each contribute to the Mg(2+) site.

This sequence belongs to the prokaryotic GSH synthase family. Requires Mg(2+) as cofactor. It depends on Mn(2+) as a cofactor.

The catalysed reaction is gamma-L-glutamyl-L-cysteine + glycine + ATP = glutathione + ADP + phosphate + H(+). It functions in the pathway sulfur metabolism; glutathione biosynthesis; glutathione from L-cysteine and L-glutamate: step 2/2. The polypeptide is Glutathione synthetase (Pseudomonas syringae pv. tomato (strain ATCC BAA-871 / DC3000)).